A 79-amino-acid polypeptide reads, in one-letter code: Neurotoxin ShK-like1 (79 aa).

An N-terminal signal peptide occupies residues 1 to 25; the sequence is MSRKLLAVLMVCTFFLIAASMGTNA. The propeptide occupies 26–35; the sequence is LPFHEGIERR. The region spanning 39–78 is the ShKT domain; that stretch reads CVDKMPFVCMRKDIPAICKNRNHRSYAFIMDVCRKTCGQC. Cystine bridges form between Cys39-Cys78, Cys47-Cys71, and Cys56-Cys75.

In terms of tissue distribution, expressed in nematocytes (in planulae and primary polyps). Is localized predominantly in the body column nematocytes and not in the tentacles (in primary polyps).

It is found in the nematocyst. It localises to the secreted. Neurotoxin. In vivo, induces contraction paralysis followed by death (within 2 hours) on zebrafish larvae. Also induces body contraction in Nematostella 11-dpf polyps. The protein is Neurotoxin ShK-like1 of Nematostella vectensis (Starlet sea anemone).